The sequence spans 210 residues: Thymidylate kinase (210 aa).

10–17 (GPEGAGKS) provides a ligand contact to ATP.

Belongs to the thymidylate kinase family.

It carries out the reaction dTMP + ATP = dTDP + ADP. Phosphorylation of dTMP to form dTDP in both de novo and salvage pathways of dTTP synthesis. The sequence is that of Thymidylate kinase from Pseudomonas aeruginosa (strain UCBPP-PA14).